A 475-amino-acid polypeptide reads, in one-letter code: Ribulose bisphosphate carboxylase large chain (475 aa).

A propeptide spanning residues 1–2 (MS) is cleaved from the precursor. Residue Pro3 is modified to N-acetylproline. Lys14 is subject to N6,N6,N6-trimethyllysine. Substrate contacts are provided by Asn123 and Thr173. The active-site Proton acceptor is Lys175. Residue Lys177 participates in substrate binding. Mg(2+)-binding residues include Lys201, Asp203, and Glu204. Lys201 is subject to N6-carboxylysine. The Proton acceptor role is filled by His294. Substrate is bound by residues Arg295, His327, and Ser379.

This sequence belongs to the RuBisCO large chain family. Type I subfamily. As to quaternary structure, heterohexadecamer of 8 large chains and 8 small chains; disulfide-linked. The disulfide link is formed within the large subunit homodimers. Requires Mg(2+) as cofactor. Post-translationally, the disulfide bond which can form in the large chain dimeric partners within the hexadecamer appears to be associated with oxidative stress and protein turnover.

The protein localises to the plastid. It localises to the chloroplast. It catalyses the reaction 2 (2R)-3-phosphoglycerate + 2 H(+) = D-ribulose 1,5-bisphosphate + CO2 + H2O. The enzyme catalyses D-ribulose 1,5-bisphosphate + O2 = 2-phosphoglycolate + (2R)-3-phosphoglycerate + 2 H(+). In terms of biological role, ruBisCO catalyzes two reactions: the carboxylation of D-ribulose 1,5-bisphosphate, the primary event in carbon dioxide fixation, as well as the oxidative fragmentation of the pentose substrate in the photorespiration process. Both reactions occur simultaneously and in competition at the same active site. This Ostrya virginiana (American hophornbeam) protein is Ribulose bisphosphate carboxylase large chain.